The chain runs to 134 residues: Transcription antitermination protein NusB (134 aa).

This sequence belongs to the NusB family.

In terms of biological role, involved in transcription antitermination. Required for transcription of ribosomal RNA (rRNA) genes. Binds specifically to the boxA antiterminator sequence of the ribosomal RNA (rrn) operons. The chain is Transcription antitermination protein NusB from Shewanella loihica (strain ATCC BAA-1088 / PV-4).